Consider the following 183-residue polypeptide: Small ribosomal subunit protein bS16 (183 aa).

Positions 149–161 are enriched in basic and acidic residues; that stretch reads EKKAAEAAAKAEA. The interval 149-183 is disordered; sequence EKKAAEAAAKAEAEAANAPAEEAPAAEATEAPAEA. A compositionally biased stretch (low complexity) spans 162–183; it reads EAANAPAEEAPAAEATEAPAEA.

It belongs to the bacterial ribosomal protein bS16 family.

This chain is Small ribosomal subunit protein bS16, found in Phocaeicola vulgatus (strain ATCC 8482 / DSM 1447 / JCM 5826 / CCUG 4940 / NBRC 14291 / NCTC 11154) (Bacteroides vulgatus).